Here is an 804-residue protein sequence, read N- to C-terminus: Phenylalanine--tRNA ligase beta subunit (804 aa).

Residues 39–147 form the tRNA-binding domain; it reads GEGLDSVVTA…PDCEPGQPVF (109 aa). Residues 401 to 480 form the B5 domain; the sequence is LAERKVTLAV…RLNGYDNIPV (80 aa). Mg(2+) contacts are provided by D458, D464, E467, and E468. In terms of domain architecture, FDX-ACB spans 711 to 804; sequence SRFPQVARDS…LIAKLGAEIR (94 aa).

The protein belongs to the phenylalanyl-tRNA synthetase beta subunit family. Type 1 subfamily. Tetramer of two alpha and two beta subunits. Mg(2+) serves as cofactor.

Its subcellular location is the cytoplasm. It carries out the reaction tRNA(Phe) + L-phenylalanine + ATP = L-phenylalanyl-tRNA(Phe) + AMP + diphosphate + H(+). The chain is Phenylalanine--tRNA ligase beta subunit from Syntrophotalea carbinolica (strain DSM 2380 / NBRC 103641 / GraBd1) (Pelobacter carbinolicus).